Reading from the N-terminus, the 270-residue chain is MSMQTAPIKKTTLNHLQAKKNQEKIIAITAYDALFAQIFDPLVDVILVGDSLNMSFFNQNDTLSASVEMMLYHTKAVCAGAKTPFIITDMPFGSYKDEKTALKNAIRVYKETQASAIKLEGGKEKAKLVKTLTDEGVIVVGHIGLMPQFVRLDGGYKIKGKNEEQQKKLLEDALSLEEAGVGLLVLEGITTPIAQKITQKIKIPTIGIGSGKDCDGQILVWSDMLGFFDSFKPKFVREYLKGKELVQNAIKQYADDVKKGNFPNELESYH.

The Mg(2+) site is built by Asp-50 and Asp-89. Residues 50-51 (DS), Asp-89, and Lys-118 each bind 3-methyl-2-oxobutanoate. Glu-120 is a binding site for Mg(2+). The active-site Proton acceptor is the Glu-187.

It belongs to the PanB family. As to quaternary structure, homodecamer; pentamer of dimers. The cofactor is Mg(2+).

The protein resides in the cytoplasm. The catalysed reaction is 3-methyl-2-oxobutanoate + (6R)-5,10-methylene-5,6,7,8-tetrahydrofolate + H2O = 2-dehydropantoate + (6S)-5,6,7,8-tetrahydrofolate. It participates in cofactor biosynthesis; (R)-pantothenate biosynthesis; (R)-pantoate from 3-methyl-2-oxobutanoate: step 1/2. Functionally, catalyzes the reversible reaction in which hydroxymethyl group from 5,10-methylenetetrahydrofolate is transferred onto alpha-ketoisovalerate to form ketopantoate. The protein is 3-methyl-2-oxobutanoate hydroxymethyltransferase of Helicobacter pylori (strain P12).